The sequence spans 178 residues: ATP-dependent protease subunit HslV (178 aa).

T7 is a catalytic residue. Na(+) contacts are provided by G162, C165, and T168.

Belongs to the peptidase T1B family. HslV subfamily. In terms of assembly, a double ring-shaped homohexamer of HslV is capped on each side by a ring-shaped HslU homohexamer. The assembly of the HslU/HslV complex is dependent on binding of ATP.

It is found in the cytoplasm. It catalyses the reaction ATP-dependent cleavage of peptide bonds with broad specificity.. Allosterically activated by HslU binding. Functionally, protease subunit of a proteasome-like degradation complex believed to be a general protein degrading machinery. The sequence is that of ATP-dependent protease subunit HslV from Azoarcus sp. (strain BH72).